We begin with the raw amino-acid sequence, 1343 residues long: Xanthine dehydrogenase (1343 aa).

One can recognise a 2Fe-2S ferredoxin-type domain in the interval 8–95 (SELVFFVNGK…GCAVTTVEGI (88 aa)). [2Fe-2S] cluster contacts are provided by C47, C52, C55, C77, C117, C120, C152, and C154. One can recognise an FAD-binding PCMH-type domain in the interval 235–424 (FSSERVTWYR…LGIHFQKTTP (190 aa)). Residues 263 to 270 (LVVGNTEV), F343, 353 to 357 (CLGGN), D366, L414, and K432 each bind FAD. Mo-molybdopterin contacts are provided by Q780 and F811. Residues E815 and R893 each contribute to the substrate site. Position 925 (R925) interacts with Mo-molybdopterin. F927 serves as a coordination point for substrate. A1092 is a Mo-molybdopterin binding site. Residue E1275 is the Proton acceptor of the active site.

This sequence belongs to the xanthine dehydrogenase family. As to quaternary structure, homodimer. It depends on FAD as a cofactor. The cofactor is Mo-molybdopterin. Requires [2Fe-2S] cluster as cofactor.

It is found in the peroxisome. The catalysed reaction is xanthine + NAD(+) + H2O = urate + NADH + H(+). It carries out the reaction hypoxanthine + NAD(+) + H2O = xanthine + NADH + H(+). Its function is as follows. Key enzyme in purine degradation. Catalyzes the oxidation of hypoxanthine to xanthine. Catalyzes the oxidation of xanthine to uric acid. The chain is Xanthine dehydrogenase (ry) from Drosophila pseudoobscura pseudoobscura (Fruit fly).